A 403-amino-acid polypeptide reads, in one-letter code: F-box only protein 22 (403 aa).

N-acetylmethionine is present on M1. Residues F21–T67 form the F-box domain. T127 carries the phosphothreonine modification. S128 is subject to Phosphoserine. K194 is subject to N6-acetyllysine.

As to quaternary structure, directly interacts with SKP1 and CUL1. Interacts (via C-terminal) with KDM4A. Interacts with TP53. Interacts with MTOR; this interaction promotes 'lys-27'-linked ubiquitination of MTOR. (Microbial infection) Interacts with SARS_COV-2 protein NSP5; this interaction attenuates NSP5-mediated inhibition of innate immunity. Phosphorylated by EIF2AK4 at Thr-127 causes cytoplasmic retention of FBXO22. As to expression, predominantly expressed in liver, also enriched in cardiac muscle.

The protein localises to the cytoplasm. Its subcellular location is the nucleus. It localises to the myofibril. The protein resides in the sarcomere. It is found in the z line. Its function is as follows. Substrate-recognition component of the SCF (SKP1-CUL1-F-box protein)-type E3 ubiquitin ligase complex that is implicated in the control of various cellular processes such as cell cycle control, transcriptional regulation, DNA damage repair, and apoptosis. Promotes the proteasome-dependent degradation of key sarcomeric proteins, such as alpha-actinin (ACTN2) and filamin-C (FLNC), essential for maintenance of normal contractile function. Acts as a key regulator of histone methylation marks namely H3K9 and H3K36 methylation through the regulation of histone demethylase KDM4A protein levels. In complex with KDM4A, also regulates the abundance of TP53 by targeting methylated TP53 for degradation at the late senescent stage. Under oxidative stress, promotes the ubiquitination and degradation of BACH1. Mechanistically, reactive oxygen species (ROS) covalently modify cysteine residues on the bZIP domain of BACH1, leading to its release from chromatin and making it accessible to FBXO22. Upon amino acid depletion, mediates 'Lys-27'-linked ubiquitination of MTOR and thereby inhibits substrate recruitment to mTORC1. Also inhibits SARS-CoV-2 replication by inducing NSP5 degradation. The polypeptide is F-box only protein 22 (FBXO22) (Homo sapiens (Human)).